Here is a 343-residue protein sequence, read N- to C-terminus: Dual oxidase maturation factor 1 (343 aa).

Over 1-24 the chain is Extracellular; it reads MATLGHTFPFYAGPKPTFPMDTTL. Residues 25-45 traverse the membrane as a helical segment; that stretch reads ASIIMIFLTALATFIVILPGI. Topologically, residues 46-51 are cytoplasmic; sequence RGKTRL. Residues 52 to 72 traverse the membrane as a helical segment; the sequence is FWLLRVVTSLFIGAAILAVNF. At 73 to 183 the chain is on the extracellular side; sequence SSEWSVGQVS…RLAGHYTSAM (111 aa). N-linked (GlcNAc...) asparagine glycosylation is found at N84, N109, and N121. The chain crosses the membrane as a helical span at residues 184–204; sequence LWVAFLCWLLANVMLSMPVLV. Topologically, residues 205 to 206 are cytoplasmic; sequence YG. A helical transmembrane segment spans residues 207–227; it reads GYMLLATGIFQLLALLFFSMA. Over 228-249 the chain is Extracellular; the sequence is TSLTSPCPLHLGASVLHTHHGP. Residues 250-270 traverse the membrane as a helical segment; it reads AFWITLTTGLLCVLLGLAMAV. The Cytoplasmic portion of the chain corresponds to 271–343; sequence AHRMQPHRLK…AHPKDPDCAL (73 aa). Residues 306–343 are disordered; the sequence is RYRSMADSPKSQDIPLSEASSTKAYCKEAHPKDPDCAL. Residues 330-343 are compositionally biased toward basic and acidic residues; it reads YCKEAHPKDPDCAL.

It belongs to the DUOXA family. As to quaternary structure, may interact with NUMB. In terms of tissue distribution, specifically expressed in thyroid gland. Also detected in esophagus.

It localises to the membrane. May be required for the maturation and the transport from the endoplasmic reticulum to the plasma membrane of functional DUOX1. This Homo sapiens (Human) protein is Dual oxidase maturation factor 1 (DUOXA1).